Reading from the N-terminus, the 257-residue chain is BTB/POZ domain-containing protein KCTD1 (257 aa).

Residues 1-25 are disordered; the sequence is MSRPLITRSPASPLNNQGIPTPAQL. A phosphoserine mark is found at S9 and S12. The segment covering 9 to 25 has biased composition (polar residues); that stretch reads SPASPLNNQGIPTPAQL. The region spanning 30 to 100 is the BTB domain; that stretch reads APVHIDVGGH…LRTSKLLIPD (71 aa).

In terms of assembly, forms homopentamers. Interacts with KCTD15, probably forming heteropentamers depending on its abundance in a cell-type dependent manner. Interacts with TFAP2A, TFAP2B and TFAP2C via the BTB domain. In terms of processing, sumoylated.

It is found in the nucleus. In terms of biological role, may repress the transcriptional activity of AP-2 family members, including TFAP2A, TFAP2B and TFAP2C to various extent. The sequence is that of BTB/POZ domain-containing protein KCTD1 (KCTD1) from Bos taurus (Bovine).